The primary structure comprises 171 residues: 3-hydroxydecanoyl-[acyl-carrier-protein] dehydratase (171 aa).

His71 is an active-site residue.

This sequence belongs to the thioester dehydratase family. FabA subfamily. As to quaternary structure, homodimer.

It is found in the cytoplasm. It carries out the reaction a (3R)-hydroxyacyl-[ACP] = a (2E)-enoyl-[ACP] + H2O. It catalyses the reaction (3R)-hydroxydecanoyl-[ACP] = (2E)-decenoyl-[ACP] + H2O. The catalysed reaction is (2E)-decenoyl-[ACP] = (3Z)-decenoyl-[ACP]. It participates in lipid metabolism; fatty acid biosynthesis. In terms of biological role, necessary for the introduction of cis unsaturation into fatty acids. Catalyzes the dehydration of (3R)-3-hydroxydecanoyl-ACP to E-(2)-decenoyl-ACP and then its isomerization to Z-(3)-decenoyl-ACP. Can catalyze the dehydratase reaction for beta-hydroxyacyl-ACPs with saturated chain lengths up to 16:0, being most active on intermediate chain length. The polypeptide is 3-hydroxydecanoyl-[acyl-carrier-protein] dehydratase (Rhizobium meliloti (strain 1021) (Ensifer meliloti)).